The primary structure comprises 66 residues: Large ribosomal subunit protein bL35 (66 aa).

Basic residues-rich tracts occupy residues 1 to 15 (MSKLKTRSSAAKRFK) and 22 to 43 (ILHKKAGKRHNLSKKSESRKRR). Residues 1 to 43 (MSKLKTRSSAAKRFKVTATGKILHKKAGKRHNLSKKSESRKRR) are disordered.

It belongs to the bacterial ribosomal protein bL35 family.

The protein is Large ribosomal subunit protein bL35 of Dictyoglomus turgidum (strain DSM 6724 / Z-1310).